Reading from the N-terminus, the 453-residue chain is Aldehyde dehydrogenase, dimeric NADP-preferring (453 aa).

N-acetylserine is present on serine 2. At lysine 178 the chain carries N6-acetyllysine. An NAD(+)-binding site is contributed by 188 to 193; it reads GSTGVG. The residue at position 194 (lysine 194) is an N6-acetyllysine. Catalysis depends on residues glutamate 210 and cysteine 244.

It belongs to the aldehyde dehydrogenase family. As to quaternary structure, homodimer. In terms of tissue distribution, high levels in stomach, esophagus and lung; low level in the liver and kidney.

The protein localises to the cytoplasm. It carries out the reaction an aldehyde + NAD(+) + H2O = a carboxylate + NADH + 2 H(+). It catalyses the reaction octanal + NAD(+) + H2O = octanoate + NADH + 2 H(+). Functionally, ALDHs play a major role in the detoxification of alcohol-derived acetaldehyde. They are involved in the metabolism of corticosteroids, biogenic amines, neurotransmitters, and lipid peroxidation. Oxidizes medium and long chain aldehydes into non-toxic fatty acids. Preferentially oxidizes aromatic aldehyde substrates. Comprises about 50 percent of corneal epithelial soluble proteins. May play a role in preventing corneal damage caused by ultraviolet light. This is Aldehyde dehydrogenase, dimeric NADP-preferring (ALDH3A1) from Homo sapiens (Human).